The following is a 602-amino-acid chain: Probable translation initiation factor IF-2 (602 aa).

The 218-residue stretch at leucine 10–methionine 227 folds into the tr-type G domain. Positions glycine 19–threonine 26 are G1. GTP is bound at residue glycine 19–threonine 26. Positions glutamate 44–glutamate 48 are G2. Residues aspartate 83–glycine 86 are G3. Residues aspartate 83–histidine 87 and asparagine 137–aspartate 140 each bind GTP. A G4 region spans residues asparagine 137–aspartate 140. The interval serine 205–lysine 207 is G5.

The protein belongs to the TRAFAC class translation factor GTPase superfamily. Classic translation factor GTPase family. IF-2 subfamily.

Functionally, function in general translation initiation by promoting the binding of the formylmethionine-tRNA to ribosomes. Seems to function along with eIF-2. This is Probable translation initiation factor IF-2 from Sulfurisphaera tokodaii (strain DSM 16993 / JCM 10545 / NBRC 100140 / 7) (Sulfolobus tokodaii).